Reading from the N-terminus, the 441-residue chain is 3-phosphoshikimate 1-carboxyvinyltransferase (441 aa).

The segment at 1-21 (MSANGPSHPARELKAGGSLSG) is disordered. The 3-phosphoshikimate site is built by K29, S30, and R34. K29 is a binding site for phosphoenolpyruvate. 2 residues coordinate phosphoenolpyruvate: G103 and R132. The 3-phosphoshikimate site is built by S177, Q179, D328, and K355. Q179 lines the phosphoenolpyruvate pocket. The active-site Proton acceptor is D328. Phosphoenolpyruvate is bound by residues R359 and R401.

Belongs to the EPSP synthase family. In terms of assembly, monomer.

It localises to the cytoplasm. The catalysed reaction is 3-phosphoshikimate + phosphoenolpyruvate = 5-O-(1-carboxyvinyl)-3-phosphoshikimate + phosphate. It functions in the pathway metabolic intermediate biosynthesis; chorismate biosynthesis; chorismate from D-erythrose 4-phosphate and phosphoenolpyruvate: step 6/7. In terms of biological role, catalyzes the transfer of the enolpyruvyl moiety of phosphoenolpyruvate (PEP) to the 5-hydroxyl of shikimate-3-phosphate (S3P) to produce enolpyruvyl shikimate-3-phosphate and inorganic phosphate. The protein is 3-phosphoshikimate 1-carboxyvinyltransferase of Parasynechococcus marenigrum (strain WH8102).